The sequence spans 68 residues: U2-agatoxin-Ao1u (68 aa).

Positions 1 to 20 (MKAIISLLLISAMVFSMIEA) are cleaved as a signal peptide. A propeptide spanning residues 21-34 (VPLEEGLQLFEGER) is cleaved from the precursor. 3 cysteine pairs are disulfide-bonded: Cys36-Cys52, Cys43-Cys57, and Cys51-Cys67.

This sequence belongs to the neurotoxin 01 (U2-agtx) family. As to expression, expressed by the venom gland.

It is found in the secreted. Functionally, insect active toxin causing rapid but reversible paralysis in crickets. No activity shown in mammals. Does not show effect on mammalian voltage-gated calcium channels. The polypeptide is U2-agatoxin-Ao1u (Agelena orientalis (Funnel-web spider)).